A 183-amino-acid polypeptide reads, in one-letter code: Glutathione-regulated potassium-efflux system ancillary protein KefG (183 aa).

This sequence belongs to the NAD(P)H dehydrogenase (quinone) family. KefG subfamily. Interacts with KefB.

Its subcellular location is the cell inner membrane. It catalyses the reaction a quinone + NADH + H(+) = a quinol + NAD(+). The enzyme catalyses a quinone + NADPH + H(+) = a quinol + NADP(+). Its function is as follows. Regulatory subunit of a potassium efflux system that confers protection against electrophiles. Required for full activity of KefB. This is Glutathione-regulated potassium-efflux system ancillary protein KefG from Enterobacter sp. (strain 638).